We begin with the raw amino-acid sequence, 703 residues long: Epidermal growth factor receptor (703 aa).

A signal peptide spans 1-30 (MGVRSPLSASGPRGAAVLVLLLLGVALCSA). Residues 31–654 (VEEKKVCQGT…GCPNGSKTPS (624 aa)) are Extracellular-facing. The cysteines at positions 37 and 64 are disulfide-linked. Asn134, Asn190, and Asn200 each carry an N-linked (GlcNAc...) asparagine glycan. Disulfide bonds link Cys164–Cys194, Cys197–Cys206, Cys201–Cys214, Cys222–Cys230, Cys226–Cys238, Cys239–Cys247, Cys243–Cys255, Cys258–Cys267, Cys271–Cys298, Cys302–Cys314, Cys318–Cys333, Cys336–Cys340, and Cys344–Cys369. 3 N-linked (GlcNAc...) asparagine glycosylation sites follow: Asn359, Asn368, and Asn420. 11 disulfides stabilise this stretch: Cys477-Cys506, Cys513-Cys522, Cys517-Cys530, Cys533-Cys542, Cys546-Cys562, Cys565-Cys581, Cys569-Cys589, Cys592-Cys601, Cys605-Cys627, Cys630-Cys638, and Cys634-Cys646. Residues Asn573 and Asn578 are each glycosylated (N-linked (GlcNAc...) asparagine). N-linked (GlcNAc...) asparagine glycans are attached at residues Asn613 and Asn633. N-linked (GlcNAc...) asparagine glycosylation occurs at Asn648. The chain crosses the membrane as a helical span at residues 655 to 667 (IAAGVVGGLLCLV). Residues 668 to 703 (VVGLGIGLYLRRRHIVRKRTLRRLLQERELVEPLTP) are Cytoplasmic-facing. A phosphothreonine mark is found at Thr687 and Thr702.

This sequence belongs to the protein kinase superfamily. Tyr protein kinase family. EGF receptor subfamily. In terms of assembly, binding of the ligand triggers homo- and/or heterodimerization of the receptor triggering its autophosphorylation. Phosphorylated. Autophosphorylates.

It is found in the cell membrane. The protein resides in the endoplasmic reticulum membrane. Its subcellular location is the golgi apparatus membrane. The protein localises to the nucleus membrane. It localises to the endosome. It is found in the endosome membrane. The protein resides in the nucleus. The enzyme catalyses L-tyrosyl-[protein] + ATP = O-phospho-L-tyrosyl-[protein] + ADP + H(+). Endocytosis and inhibition of the activated EGFR by phosphatases constitute immediate regulatory mechanisms. Moreover, inducible feedback inhibitors may constitute alternative regulatory mechanisms for the EGFR signaling. Its function is as follows. Receptor tyrosine kinase binding ligands of the EGF family and activating several signaling cascades to convert extracellular cues into appropriate cellular responses. Known ligands include EGF and TGFA/TGF-alpha. Ligand binding triggers receptor homo- and/or heterodimerization and autophosphorylation on key cytoplasmic residues. The phosphorylated receptor recruits adapter proteins like GRB2 which in turn activates complex downstream signaling cascades. Activates at least 4 major downstream signaling cascades including the RAS-RAF-MEK-ERK, PI3 kinase-AKT, PLCgamma-PKC and STATs modules. May also activate the NF-kappa-B signaling cascade. The sequence is that of Epidermal growth factor receptor (EGFR) from Gallus gallus (Chicken).